Consider the following 307-residue polypeptide: Nodulation protein NoeC (307 aa).

8 helical membrane-spanning segments follow: residues 46-66 (APLWLAFMTFCSVASGIYVLN), 91-111 (SGLTGVWMCLVLIALGGVCAI), 117-137 (LFAITASYVALSVIYVGKVRG), 140-160 (VLDLFVLSALYTTRILAGATA), 163-183 (IPVPASFLAFSAMAFVSLASI), 212-232 (IVALICVSAGYAAVVFLELFV), 238-258 (AQGPAPIFVSNAMCVVVAYWI), and 279-299 (VTDGSSLVCILGLALGLVFLM).

The protein localises to the cell membrane. This chain is Nodulation protein NoeC (noeC), found in Azorhizobium caulinodans (strain ATCC 43989 / DSM 5975 / JCM 20966 / LMG 6465 / NBRC 14845 / NCIMB 13405 / ORS 571).